A 483-amino-acid chain; its full sequence is FAD-linked oxidoreductase easE (483 aa).

Residues 10–193 (QGRLPLYSAV…TEATVRVFSD (184 aa)) form the FAD-binding PCMH-type domain.

It belongs to the oxygen-dependent FAD-linked oxidoreductase family. Requires FAD as cofactor.

The protein operates within alkaloid biosynthesis; ergot alkaloid biosynthesis. FAD-linked oxidoreductase; part of the gene cluster that mediates the biosynthesis of fungal ergot alkaloid. DmaW catalyzes the first step of ergot alkaloid biosynthesis by condensing dimethylallyl diphosphate (DMAP) and tryptophan to form 4-dimethylallyl-L-tryptophan. The second step is catalyzed by the methyltransferase easF that methylates 4-dimethylallyl-L-tryptophan in the presence of S-adenosyl-L-methionine, resulting in the formation of 4-dimethylallyl-L-abrine. The catalase easC and the FAD-dependent oxidoreductase easE then transform 4-dimethylallyl-L-abrine to chanoclavine-I which is further oxidized by easD in the presence of NAD(+), resulting in the formation of chanoclavine-I aldehyde. Agroclavine dehydrogenase easG then mediates the conversion of chanoclavine-I aldehyde to agroclavine via a non-enzymatic adduct reaction: the substrate is an iminium intermediate that is formed spontaneously from chanoclavine-I aldehyde in the presence of glutathione. The presence of easA is not required to complete this reaction. Further conversion of agroclavine to paspalic acid is a two-step process involving oxidation of agroclavine to elymoclavine and of elymoclavine to paspalic acid, the second step being performed by the elymoclavine oxidase cloA. Paspalic acid is then further converted to D-lysergic acid. Ergopeptines are assembled from D-lysergic acid and three different amino acids by the D-lysergyl-peptide-synthetases composed each of a monomudular and a trimodular nonribosomal peptide synthetase subunit. LpsB and lpsC encode the monomodular subunits responsible for D-lysergic acid activation and incorporation into the ergopeptine backbone. LpsA1 and A2 subunits encode the trimodular nonribosomal peptide synthetase assembling the tripeptide portion of ergopeptines. LpsA1 is responsible for formation of the major ergopeptine, ergotamine, and lpsA2 for alpha-ergocryptine, the minor ergopeptine of the total alkaloid mixture elaborated by C.purpurea. D-lysergyl-tripeptides are assembled by the nonribosomal peptide synthetases and released as N-(D-lysergyl-aminoacyl)-lactams. Cyclolization of the D-lysergyl-tripeptides is performed by the Fe(2+)/2-ketoglutarate-dependent dioxygenase easH which introduces a hydroxyl group into N-(D-lysergyl-aminoacyl)-lactam at alpha-C of the aminoacyl residue followed by spontaneous condensation with the terminal lactam carbonyl group. In Claviceps purpurea (Ergot fungus), this protein is FAD-linked oxidoreductase easE.